Reading from the N-terminus, the 1229-residue chain is DNA-directed RNA polymerase subunit beta (1229 aa).

The tract at residues 1175–1229 (ESIDEDEQPQGLGAFERGLEEVENGEEDDDKEKFYEDLMDASQEQDESADDDIDE) is disordered. Acidic residues-rich tracts occupy residues 1195–1204 (EVENGEEDDD) and 1211–1229 (DLMDASQEQDESADDDIDE).

The protein belongs to the RNA polymerase beta chain family. The RNAP catalytic core consists of 2 alpha, 1 beta, 1 beta' and 1 omega subunit. When a sigma factor is associated with the core the holoenzyme is formed, which can initiate transcription.

The catalysed reaction is RNA(n) + a ribonucleoside 5'-triphosphate = RNA(n+1) + diphosphate. Its function is as follows. DNA-dependent RNA polymerase catalyzes the transcription of DNA into RNA using the four ribonucleoside triphosphates as substrates. This chain is DNA-directed RNA polymerase subunit beta, found in Caldicellulosiruptor saccharolyticus (strain ATCC 43494 / DSM 8903 / Tp8T 6331).